The following is a 143-amino-acid chain: Auxin-responsive protein SAUR67 (143 aa).

The protein belongs to the ARG7 family.

The protein localises to the cell membrane. In terms of biological role, may promote auxin-stimulated organ elongation, such as hypocotyls, stamen filaments and petals. The chain is Auxin-responsive protein SAUR67 from Arabidopsis thaliana (Mouse-ear cress).